Consider the following 257-residue polypeptide: Ribonuclease HII (257 aa).

An RNase H type-2 domain is found at 72–257 (TYIAGIDEVG…FAPIKDMIQK (186 aa)). Positions 78, 79, and 170 each coordinate a divalent metal cation.

This sequence belongs to the RNase HII family. Mn(2+) serves as cofactor. It depends on Mg(2+) as a cofactor.

It localises to the cytoplasm. The catalysed reaction is Endonucleolytic cleavage to 5'-phosphomonoester.. In terms of biological role, endonuclease that specifically degrades the RNA of RNA-DNA hybrids. This Bacillus cereus (strain ATCC 10987 / NRS 248) protein is Ribonuclease HII.